We begin with the raw amino-acid sequence, 377 residues long: Ipis-1 (377 aa).

N-linked (GlcNAc...) asparagine glycans are attached at residues Asn-11 and Asn-226.

The protein belongs to the serpin family. As to expression, female salivary gland. Not detected in midgut and other tissues.

The protein localises to the secreted. In terms of biological role, salivary protein with immunosuppressive properties that can modulate blood feeding of ticks on vertebrate species. Inhibits proliferation of bovine peripheral blood mononuclear cells (PBMCs). Inhibits IFN-gamma (IFNG) production by bovine PBMCs. This Ixodes persulcatus (Taiga tick) protein is Ipis-1.